Here is a 500-residue protein sequence, read N- to C-terminus: Serine/threonine-protein phosphatase 2A 56 kDa regulatory subunit beta isoform (500 aa).

Residues 1–19 (METKLPPASTPTSPSSPGL) show a composition bias toward low complexity. Disordered stretches follow at residues 1–55 (METK…YQSN) and 474–500 (GTQG…GGQS). S32, S35, S44, S46, S47, and S48 each carry phosphoserine; by CLK2. The segment covering 34–45 (RSLRRARPRRSH) has biased composition (basic residues).

It belongs to the phosphatase 2A regulatory subunit B56 family. Component of the serine/threonine-protein phosphatase 2A complex (PP2A). This complex consists of a common heterodimeric core enzyme, composed of a 36 kDa catalytic subunit (subunit C) and a 65 kDa constant scaffold subunit (PR65 or subunit A), that associates with a variety of regulatory subunits. Proteins that associate with the core dimer include three families of regulatory subunits B (the R2/B/PR55/B55, R3/B''/PR72/PR130/PR59 and R5/B'/B56 families), the 48 kDa variable regulatory subunit, viral proteins, and cell signaling molecules. Interacts with SGO1. Interacts with AKT1. Highly expressed in brain.

It is found in the nucleus. Functionally, as the regulatory component of the serine/threonine-protein phosphatase 2A (PP2A) holoenzyme, modulates substrate specificity, subcellular localization, and responsiveness to phosphorylation. The phosphorylated form mediates the interaction between PP2A and AKT1, leading to AKT1 dephosphorylation. This Oryctolagus cuniculus (Rabbit) protein is Serine/threonine-protein phosphatase 2A 56 kDa regulatory subunit beta isoform (PPP2R5B).